A 579-amino-acid chain; its full sequence is Extracellular serine/threonine protein kinase FAM20C (579 aa).

Residues 1–10 lie on the Cytoplasmic side of the membrane; sequence MKMILVRRFR. Residues 1 to 87 constitute a propeptide that is removed on maturation; the sequence is MKMILVRRFR…PNKHTLRILQ (87 aa). The chain crosses the membrane as a helical; Signal-anchor for type II membrane protein span at residues 11 to 31; it reads VLILVVFLLACALHIAVDLLP. Residues 32-579 lie on the Lumenal side of the membrane; it reads KLDRRATRSS…ATEHRASTER (548 aa). Residues 38–79 form a disordered region; that stretch reads TRSSGEPGCSCAQPAAEAAGPGWAQARSRPGESAGGDAGWPN. A compositionally biased stretch (low complexity) spans 49–63; that stretch reads AQPAAEAAGPGWAQA. Asn96 carries N-linked (GlcNAc...) asparagine glycosylation. Positions 104-155 are disordered; it reads KLPSAAEPVDHAPRGQEPRSPPPRDPAHRPLLRDPGPRPRVPPPGPSGDGSL. Composition is skewed to basic and acidic residues over residues 111-120 and 128-140; these read PVDHAPRGQE and DPAH…DPGP. Residues Gln264, Lys280, and Glu301 each contribute to the ATP site. Glu301 serves as a coordination point for Mn(2+). Residues 349–560 are kinase domain; it reads FVSPANNICF…AVRDCVEKDG (212 aa). 2 disulfides stabilise this stretch: Cys357–Cys373 and Cys362–Cys366. 384–387 provides a ligand contact to ATP; sequence AAFL. 2 cysteine pairs are disulfide-bonded: Cys421–Cys495 and Cys496–Cys555. Asp453 is an active-site residue. ATP-binding residues include Glu458 and Asp473. Asp473 is a binding site for Mn(2+).

This sequence belongs to the FAM20 family. Homodimer; disulfide-linked. Interacts with FAM20A; probably forming a heterotetramer of 2 subunits of FAM20A and 2 subunits of FAM20C. Interacts with COPII components SEC23A and SEC24A; transport of FAM20C from the endoplasmic reticulum to the Golgi is likely to be mediated by COPII vesicles. Mn(2+) serves as cofactor. N-glycosylation is required for folding. In terms of processing, autophosphorylated. Post-translationally, propeptide cleavage by MBTPS1/S1P promotes FAM20C secretion and maximal kinase activity which is essential for efficient osteoblast differentiation and biomineralization. In the mammary gland, expressed at higher levels in lactating mice than in virgin mice (at protein level). Highly expressed in the tooth. No expression in the dental pulp. At the secretory stage of amelogenesis, it is detected in the matrix of the enamel, in the ameloblasts, and within the cells adjoining the stratum intermedium (a tissue layer analogous to the stellate reticulum seen in the developing molar). Strong expression is observed in maturation stage ameloblasts and throughout the non-cornified layers of the gingival epithelium. Expressed at moderate levels in bone and at low levels in kidney, liver, brain and lung. Very low expression, if any, in spleen and skeletal muscle.

Its subcellular location is the golgi apparatus membrane. It localises to the secreted. It is found in the endoplasmic reticulum. The enzyme catalyses L-seryl-[protein] + ATP = O-phospho-L-seryl-[protein] + ADP + H(+). It catalyses the reaction L-threonyl-[protein] + ATP = O-phospho-L-threonyl-[protein] + ADP + H(+). With respect to regulation, serine/threonine protein kinase activity is increased upon interaction with FAM20A. In terms of biological role, golgi serine/threonine protein kinase that phosphorylates secretory pathway proteins within Ser-x-Glu/pSer motifs and plays a key role in biomineralization of bones and teeth. Constitutes the main protein kinase for extracellular proteins, generating the majority of the extracellular phosphoproteome. Mainly phosphorylates proteins within the Ser-x-Glu/pSer motif, but also displays a broader substrate specificity. Phosphorylates ERO1A, enhancing its activity which is required to maintain endoplasmic reticulum redox homeostasis and for oxidative protein folding. During endoplasmic reticulum stress, phosphorylates P4HB/PDIA1 which induces a functional switch, causing P4HB to change from an oxidoreductase to a molecular chaperone. This is critical to maintain ER proteostasis and reduce cell death under ER stress. Phosphorylation of P4HB also promotes its interaction with ERN1, leading to reduced activity of ERN1, a key sensor for the endoplasmic reticulum unfolded protein response. Required for osteoblast differentiation and mineralization. Phosphorylates casein as well as a number of proteins involved in biomineralization such as AMELX, AMTN, ENAM and SPP1. In addition to its role in biomineralization, also plays a role in lipid homeostasis, wound healing and cell migration and adhesion. This is Extracellular serine/threonine protein kinase FAM20C from Mus musculus (Mouse).